The following is a 436-amino-acid chain: 3-ketoacyl-CoA thiolase (436 aa).

Catalysis depends on cysteine 99, which acts as the Acyl-thioester intermediate. Residues histidine 392 and cysteine 422 each act as proton acceptor in the active site.

It belongs to the thiolase-like superfamily. Thiolase family. Heterotetramer of two alpha chains (FadJ) and two beta chains (FadI).

It is found in the cytoplasm. It catalyses the reaction an acyl-CoA + acetyl-CoA = a 3-oxoacyl-CoA + CoA. It participates in lipid metabolism; fatty acid beta-oxidation. Its function is as follows. Catalyzes the final step of fatty acid oxidation in which acetyl-CoA is released and the CoA ester of a fatty acid two carbons shorter is formed. The protein is 3-ketoacyl-CoA thiolase of Escherichia coli (strain K12 / MC4100 / BW2952).